Reading from the N-terminus, the 139-residue chain is uncharacterized protein (139 aa).

An HIT domain is found at 3–110 (IFCNIVEGRD…VPTWSQDPDI (108 aa)). The Histidine triad motif motif lies at 95 to 99 (HSHFH).

This is an uncharacterized protein from Saccharolobus solfataricus (strain ATCC 35092 / DSM 1617 / JCM 11322 / P2) (Sulfolobus solfataricus).